The chain runs to 424 residues: Histone-binding protein RBBP7 (424 aa).

7 WD repeats span residues 47–121 (QWLP…KINH), 127–172 (RARY…LRLR), 180–216 (GLSW…KIVD), 227–268 (VVED…HSVD), 274–311 (VNCL…LHSF), 317–368 (EIFQ…LFIH), and 375–402 (ISDF…IWQM). Residues 359 to 404 (DGPPELLFIHGGHTAKISDFSWNPNEPWVICSVSEDNIMQIWQMAE) are interaction with HAT1.

The protein belongs to the WD repeat RBAP46/RBAP48/MSI1 family. As to quaternary structure, binds directly to helix 1 of the histone fold of histone H4, a region that is not accessible when H4 is in chromatin. Also interacts with histone H2B and HAT1.

It localises to the nucleus. Its function is as follows. Core histone-binding subunit that may target chromatin remodeling factors, histone acetyltransferases and histone deacetylases to their histone substrates in a manner that is regulated by nucleosomal DNA. Component of several complexes which regulate chromatin metabolism. This chain is Histone-binding protein RBBP7 (RBBP7), found in Gallus gallus (Chicken).